Consider the following 374-residue polypeptide: Ribosomal RNA large subunit methyltransferase M (374 aa).

Residues Ser-188, 221–224 (CPGG), Asp-240, Asp-260, and Asp-276 contribute to the S-adenosyl-L-methionine site. Lys-305 serves as the catalytic Proton acceptor.

It belongs to the class I-like SAM-binding methyltransferase superfamily. RNA methyltransferase RlmE family. RlmM subfamily. As to quaternary structure, monomer.

The protein localises to the cytoplasm. The catalysed reaction is cytidine(2498) in 23S rRNA + S-adenosyl-L-methionine = 2'-O-methylcytidine(2498) in 23S rRNA + S-adenosyl-L-homocysteine + H(+). Functionally, catalyzes the 2'-O-methylation at nucleotide C2498 in 23S rRNA. The sequence is that of Ribosomal RNA large subunit methyltransferase M from Edwardsiella ictaluri (strain 93-146).